We begin with the raw amino-acid sequence, 40 residues long: Large ribosomal subunit protein bL36 (40 aa).

Belongs to the bacterial ribosomal protein bL36 family.

The protein is Large ribosomal subunit protein bL36 of Corynebacterium urealyticum (strain ATCC 43042 / DSM 7109).